We begin with the raw amino-acid sequence, 483 residues long: Bifunctional protein HldE (483 aa).

The segment at 1 to 327 (MDDALAHLPR…ACASSAQGEP (327 aa)) is ribokinase. ATP is bound at residue 201–204 (NRKE). Residue Asp-272 is part of the active site. Residues 354–483 (FTNGCFDLLH…TTNLIARMNS (130 aa)) are cytidylyltransferase.

In the N-terminal section; belongs to the carbohydrate kinase PfkB family. This sequence in the C-terminal section; belongs to the cytidylyltransferase family. As to quaternary structure, homodimer.

The catalysed reaction is D-glycero-beta-D-manno-heptose 7-phosphate + ATP = D-glycero-beta-D-manno-heptose 1,7-bisphosphate + ADP + H(+). The enzyme catalyses D-glycero-beta-D-manno-heptose 1-phosphate + ATP + H(+) = ADP-D-glycero-beta-D-manno-heptose + diphosphate. It functions in the pathway nucleotide-sugar biosynthesis; ADP-L-glycero-beta-D-manno-heptose biosynthesis; ADP-L-glycero-beta-D-manno-heptose from D-glycero-beta-D-manno-heptose 7-phosphate: step 1/4. It participates in nucleotide-sugar biosynthesis; ADP-L-glycero-beta-D-manno-heptose biosynthesis; ADP-L-glycero-beta-D-manno-heptose from D-glycero-beta-D-manno-heptose 7-phosphate: step 3/4. In terms of biological role, catalyzes the phosphorylation of D-glycero-D-manno-heptose 7-phosphate at the C-1 position to selectively form D-glycero-beta-D-manno-heptose-1,7-bisphosphate. Functionally, catalyzes the ADP transfer from ATP to D-glycero-beta-D-manno-heptose 1-phosphate, yielding ADP-D-glycero-beta-D-manno-heptose. This is Bifunctional protein HldE from Caulobacter vibrioides (strain ATCC 19089 / CIP 103742 / CB 15) (Caulobacter crescentus).